A 68-amino-acid polypeptide reads, in one-letter code: Large ribosomal subunit protein bL32 (68 aa).

Belongs to the bacterial ribosomal protein bL32 family.

This Onion yellows phytoplasma (strain OY-M) protein is Large ribosomal subunit protein bL32.